The chain runs to 561 residues: Dihydroxy-acid dehydratase (561 aa).

Position 50 (C50) interacts with [2Fe-2S] cluster. A Mg(2+)-binding site is contributed by D82. A [2Fe-2S] cluster-binding site is contributed by C123. Residues D124 and K125 each coordinate Mg(2+). K125 carries the post-translational modification N6-carboxylysine. C195 serves as a coordination point for [2Fe-2S] cluster. E447 contacts Mg(2+). S473 acts as the Proton acceptor in catalysis.

It belongs to the IlvD/Edd family. As to quaternary structure, homodimer. [2Fe-2S] cluster serves as cofactor. Requires Mg(2+) as cofactor.

It catalyses the reaction (2R)-2,3-dihydroxy-3-methylbutanoate = 3-methyl-2-oxobutanoate + H2O. It carries out the reaction (2R,3R)-2,3-dihydroxy-3-methylpentanoate = (S)-3-methyl-2-oxopentanoate + H2O. Its pathway is amino-acid biosynthesis; L-isoleucine biosynthesis; L-isoleucine from 2-oxobutanoate: step 3/4. It functions in the pathway amino-acid biosynthesis; L-valine biosynthesis; L-valine from pyruvate: step 3/4. Its function is as follows. Functions in the biosynthesis of branched-chain amino acids. Catalyzes the dehydration of (2R,3R)-2,3-dihydroxy-3-methylpentanoate (2,3-dihydroxy-3-methylvalerate) into 2-oxo-3-methylpentanoate (2-oxo-3-methylvalerate) and of (2R)-2,3-dihydroxy-3-methylbutanoate (2,3-dihydroxyisovalerate) into 2-oxo-3-methylbutanoate (2-oxoisovalerate), the penultimate precursor to L-isoleucine and L-valine, respectively. This chain is Dihydroxy-acid dehydratase, found in Trichodesmium erythraeum (strain IMS101).